The sequence spans 167 residues: 3-isopropylmalate dehydratase small subunit (167 aa).

This sequence belongs to the LeuD family. LeuD type 2 subfamily. As to quaternary structure, heterodimer of LeuC and LeuD.

The enzyme catalyses (2R,3S)-3-isopropylmalate = (2S)-2-isopropylmalate. It participates in amino-acid biosynthesis; L-leucine biosynthesis; L-leucine from 3-methyl-2-oxobutanoate: step 2/4. In terms of biological role, catalyzes the isomerization between 2-isopropylmalate and 3-isopropylmalate, via the formation of 2-isopropylmaleate. The polypeptide is 3-isopropylmalate dehydratase small subunit (Oleidesulfovibrio alaskensis (strain ATCC BAA-1058 / DSM 17464 / G20) (Desulfovibrio alaskensis)).